The following is a 361-amino-acid chain: MTPIPSDRLDAILARHDIVTAQLADGSADAGSIVQLSRELSELDGVVAAIHHYRLAEANLAGIRAMIDEPGGDPEMRALAAEEKPEAEEALEQAHRALQLILLPKDAADEKSAILEIRAGTGGDEAALFAGDLFRMYARYAESKGWRVEVISESEGTAGGYREVVAEVKGRSVFSRLKFESGAHRVQRVPDTETQGRIHTSAATVAVLPEAEEVDIVVNEADLKIDTMRAQGAGGQHVNKTESAIRITHIPTGVVVFVQEERSQHKNRARAMSLLRSKLFDAERTAKDSARAADRKAQVGSGDRSERIRTYNFPQGRVTDHRINLTLYKLEEVMAGQALDEVIDALVTEHQAELLAAEGMA.

Gln-236 bears the N5-methylglutamine mark. Residues 285–309 (TAKDSARAADRKAQVGSGDRSERIR) are compositionally biased toward basic and acidic residues. Residues 285–311 (TAKDSARAADRKAQVGSGDRSERIRTY) form a disordered region.

The protein belongs to the prokaryotic/mitochondrial release factor family. Methylated by PrmC. Methylation increases the termination efficiency of RF1.

It localises to the cytoplasm. Its function is as follows. Peptide chain release factor 1 directs the termination of translation in response to the peptide chain termination codons UAG and UAA. The sequence is that of Peptide chain release factor 1 from Methylorubrum extorquens (strain CM4 / NCIMB 13688) (Methylobacterium extorquens).